A 311-amino-acid chain; its full sequence is Pyrimidine-specific ribonucleoside hydrolase RihA (311 aa).

Residue His240 is part of the active site.

This sequence belongs to the IUNH family. RihA subfamily.

Functionally, hydrolyzes cytidine or uridine to ribose and cytosine or uracil, respectively. The sequence is that of Pyrimidine-specific ribonucleoside hydrolase RihA from Salmonella paratyphi C (strain RKS4594).